We begin with the raw amino-acid sequence, 361 residues long: Diacylglycerol O-acyltransferase 2 (361 aa).

The Cytoplasmic portion of the chain corresponds to 1 to 42 (MKTLIAAYSGVLRGTGSSILSALQDLFSVTWLNRAKVEKQLQ). A helical membrane pass occupies residues 43-61 (VISVLQWVLSFLVLGVACS). The Lumenal portion of the chain corresponds to 62–65 (VILM). The helical transmembrane segment at 66-85 (YTFCTDCWLIAVLYFTWLVF) threads the bilayer. At 86 to 361 (DWNTPKKGGR…LPETEVLEVN (276 aa)) the chain is on the cytoplasmic side.

The protein belongs to the diacylglycerol acyltransferase family. In terms of assembly, forms multimeric complexes consisting of several DGAT2 subunits. Interacts with SLC27A1 and this interaction is enhanced in the presence of ZFYVE1.

It localises to the endoplasmic reticulum membrane. The protein localises to the lipid droplet. The protein resides in the cytoplasm. Its subcellular location is the perinuclear region. It catalyses the reaction an acyl-CoA + a 1,2-diacyl-sn-glycerol = a triacyl-sn-glycerol + CoA. The enzyme catalyses all-trans-retinol + an acyl-CoA = an all-trans-retinyl ester + CoA. It carries out the reaction 2-(9Z-octadecenoyl)-glycerol + (9Z)-octadecenoyl-CoA = 1,2-di-(9Z-octadecenoyl)-sn-glycerol + CoA. The catalysed reaction is 1,2-di-(9Z-octadecenoyl)-sn-glycerol + (9Z)-octadecenoyl-CoA = 1,2,3-tri-(9Z-octadecenoyl)-glycerol + CoA. It catalyses the reaction all-trans-retinol + hexadecanoyl-CoA = all-trans-retinyl hexadecanoate + CoA. The enzyme catalyses 1-O-(9Z-octadecenyl)-glycerol + (9Z)-octadecenoyl-CoA = 1-O-(9Z-octadecyl)-3-(9Z-octadecenoyl)-glycerol + CoA. It carries out the reaction 1-(9Z-octadecenoyl)-glycerol + (9Z)-octadecenoyl-CoA = 1,2-di-(9Z-octadecenoyl)-glycerol + CoA. The catalysed reaction is 1,2-di-(9Z-octadecenoyl)-sn-glycerol + hexadecanoyl-CoA = 1,2-di-(9Z)-octadecenoyl-3-hexadecanoyl-sn-glycerol + CoA. It catalyses the reaction 1,3-di-(9Z-octadecenoyl)-glycerol + (9Z)-octadecenoyl-CoA = 1,2,3-tri-(9Z-octadecenoyl)-glycerol + CoA. The enzyme catalyses 2,3-di-(9Z)-octadecenoyl-sn-glycerol + (9Z)-octadecenoyl-CoA = 1,2,3-tri-(9Z-octadecenoyl)-glycerol + CoA. It carries out the reaction 2-(9Z-octadecenoyl)-glycerol + hexadecanoyl-CoA = 1-hexadecanoyl-2-(9Z-octadecenoyl)-sn-glycerol + CoA. It participates in glycerolipid metabolism; triacylglycerol biosynthesis. Inhibited by niacin. Essential acyltransferase that catalyzes the terminal and only committed step in triacylglycerol synthesis by using diacylglycerol and fatty acyl CoA as substrates. Required for synthesis and storage of intracellular triglycerides. Probably plays a central role in cytosolic lipid accumulation. In liver, is primarily responsible for incorporating endogenously synthesized fatty acids into triglycerides. Also functions as an acyl-CoA retinol acyltransferase (ARAT). Also able to use 1-monoalkylglycerol (1-MAkG) as an acyl acceptor for the synthesis of monoalkyl-monoacylglycerol (MAMAG). This Bos taurus (Bovine) protein is Diacylglycerol O-acyltransferase 2 (DGAT2).